The chain runs to 708 residues: Solute carrier family 15 member 1 (708 aa).

A helical transmembrane segment spans residues 1–21 (MGMSKSHSFFGYPLSIFFIVV). The Extracellular segment spans residues 22–53 (NEFCERFSYYGMRAILILYFTNFISWDDNLST). A glycan (N-linked (GlcNAc...) asparagine) is linked at Asn-50. The helical transmembrane segment at 54-74 (AIYHTFVALCYLTPILGALIA) threads the bilayer. The Cytoplasmic portion of the chain corresponds to 75-82 (DSWLGKFK). The helical transmembrane segment at 83-103 (TIVSLSIVYTIGQAVTSVSSI) threads the bilayer. Topologically, residues 104–118 (NDLTDHNHDGTPDSL) are extracellular. The helical transmembrane segment at 119–139 (PVHVVLSLIGLALIALGTGGI) threads the bilayer. Residues 140 to 161 (KPCVSAFGGDQFEEGQEKQRNR) are Cytoplasmic-facing. A helical transmembrane segment spans residues 162 to 182 (FFSIFYLAINAGSLLSTIITP). Residues 183–198 (MLRVQQCGIHSKQACY) are Extracellular-facing. The helical transmembrane segment at 199–219 (PLAFGVPAALMAVALIVFVLG) threads the bilayer. At 220–276 (SGMYKKFKPQGNIMGKVAKCIGFAIKNRFRHRSKAFPKREHWLDWAKEKYDERLISQ) the chain is on the cytoplasmic side. The chain crosses the membrane as a helical span at residues 277–297 (IKMVTRVMFLYIPLPMFWALF). The Extracellular segment spans residues 298–327 (DQQGSRWTLQATTMSGKIGALEIQPDQMQT). A helical membrane pass occupies residues 328-348 (VNAILIVIMVPIFDAVLYPLI). The Cytoplasmic portion of the chain corresponds to 349 to 361 (AKCGFNFTSLKKM). The helical transmembrane segment at 362 to 382 (AVGMVLASMAFVVAAIVQVEI) threads the bilayer. Over 383 to 584 (DKTLPVFPKG…SANTVNMALQ (202 aa)) the chain is Extracellular. The segment at 383–584 (DKTLPVFPKG…SANTVNMALQ (202 aa)) is extracellular domain (ECD). Asn-404, Asn-408, Asn-439, Asn-509, Asn-514, and Asn-562 each carry an N-linked (GlcNAc...) asparagine glycan. The chain crosses the membrane as a helical span at residues 585 to 605 (IPQYFLLTCGEVVFSVTGLEF). The Cytoplasmic segment spans residues 606 to 619 (SYSQAPSNMKSVLQ). A helical membrane pass occupies residues 620-640 (AGWLLTVAVGNIIVLIVAGAG). The Extracellular segment spans residues 641–645 (QFSKQ). Residues 646 to 666 (WAEYILFAALLLVVCVIFAIM) form a helical membrane-spanning segment. The Cytoplasmic segment spans residues 667 to 708 (ARFYTYINPAEIEAQFDEDEKKNRLEKSNPYFMSGANSQKQM).

Belongs to the major facilitator superfamily. Proton-dependent oligopeptide transporter (POT/PTR) (TC 2.A.17) family. As to quaternary structure, interacts (via extracellular domain region) with trypsin. As to expression, expressed in small intestine.

The protein localises to the apical cell membrane. It carries out the reaction a dipeptide(out) + H(+)(out) = a dipeptide(in) + H(+)(in). The catalysed reaction is an L-amino acid tripeptide(out) + H(+)(out) = an L-amino acid tripeptide(in) + H(+)(in). It catalyses the reaction L-alanyl-L-lysine(out) + H(+)(out) = L-alanyl-L-lysine(in) + H(+)(in). The enzyme catalyses L-alanyl-L-proline(out) + H(+)(out) = L-alanyl-L-proline(in) + H(+)(in). It carries out the reaction L-alanyl-L-valine(out) + H(+)(out) = L-alanyl-L-valine(in) + H(+)(in). The catalysed reaction is carnosine(out) + H(+)(out) = carnosine(in) + H(+)(in). It catalyses the reaction glycyl-L-glutamine(out) + H(+)(out) = glycyl-L-glutamine(in) + H(+)(in). The enzyme catalyses glycyl-L-leucine(out) + H(+)(out) = glycyl-L-leucine(in) + H(+)(in). It carries out the reaction glycyl-L-proline(out) + H(+)(out) = glycyl-L-proline(in) + H(+)(in). The catalysed reaction is glycyl-sarcosine(out) + H(+)(out) = glycyl-sarcosine(in) + H(+)(in). It catalyses the reaction L-leucyl-L-leucine(out) + H(+)(out) = L-leucyl-L-leucine(in) + H(+)(in). The enzyme catalyses L-leucyl-L-proline(out) + H(+)(out) = L-leucyl-L-proline(in) + H(+)(in). It carries out the reaction L-phenylalanyl-L-leucine(out) + H(+)(out) = L-phenylalanyl-L-leucine(in) + H(+)(in). The catalysed reaction is L-phenylalanyl-L-phenylalanine(out) + H(+)(out) = L-phenylalanyl-L-phenylalanine(in) + H(+)(in). It catalyses the reaction L-lysyl-glycine(out) + H(+)(out) = L-lysyl-glycine(in) + H(+)(in). The enzyme catalyses L-tyrosylglycine(out) + H(+)(out) = L-tyrosylglycine(in) + H(+)(in). It carries out the reaction L-alanyl-L-aspartate(out) + 2 H(+)(out) = L-alanyl-L-aspartate(in) + 2 H(+)(in). The catalysed reaction is L-aspartyl-glycine(out) + 2 H(+)(out) = L-aspartyl-glycine(in) + 2 H(+)(in). It catalyses the reaction glycyl-L-aspartate(out) + 2 H(+)(out) = glycyl-L-aspartate(in) + 2 H(+)(in). The enzyme catalyses glycyl-L-glutamate(out) + 2 H(+)(out) = glycyl-L-glutamate(in) + 2 H(+)(in). It carries out the reaction L-alanyl-L-leucyl-L-alanine(out) + H(+)(out) = L-alanyl-L-leucyl-L-alanine(in) + H(+)(in). The catalysed reaction is L-alanyl-L-prolylglycine(out) + H(+)(out) = L-alanyl-L-prolylglycine(in) + H(+)(in). It catalyses the reaction glycylglycyl-L-isoleucine(out) + H(+)(out) = glycylglycyl-L-isoleucine(in) + H(+)(in). The enzyme catalyses glycylglycyl-L-proline(out) + H(+)(out) = glycylglycyl-L-proline(in) + H(+)(in). It carries out the reaction L-methionyl-L-phenylalanyl-L-methionine(out) + H(+)(out) = L-methionyl-L-phenylalanyl-L-methionine(in) + H(+)(in). The catalysed reaction is N-acetyl-D-muramoyl-L-alanyl-D-isoglutamine(out) + 2 H(+)(out) = N-acetyl-D-muramoyl-L-alanyl-D-isoglutamine(in) + 2 H(+)(in). It catalyses the reaction N(alpha)-formyl-L-methionyl-L-leucyl-L-phenylalanine(out) + 2 H(+)(out) = N(alpha)-formyl-L-methionyl-L-leucyl-L-phenylalanine(in) + 2 H(+)(in). In terms of biological role, electrogenic proton-coupled amino-acid transporter that transports oligopeptides of 2 to 4 amino acids with a preference for dipeptides. Transports neutral and monovalently charged peptides with a proton to peptide stoichiometry of 1:1 or 2:1. Primarily responsible for the absorption of dietary di- and tripeptides from the small intestinal lumen. Mediates transepithelial transport of muramyl and N-formylated bacterial dipeptides contributing to recognition of pathogenic bacteria by the mucosal immune system. The protein is Solute carrier family 15 member 1 of Homo sapiens (Human).